The primary structure comprises 318 residues: Transaldolase (318 aa).

Lys132 functions as the Schiff-base intermediate with substrate in the catalytic mechanism.

It belongs to the transaldolase family. Type 1 subfamily. As to quaternary structure, homodimer.

It localises to the cytoplasm. The enzyme catalyses D-sedoheptulose 7-phosphate + D-glyceraldehyde 3-phosphate = D-erythrose 4-phosphate + beta-D-fructose 6-phosphate. It functions in the pathway carbohydrate degradation; pentose phosphate pathway; D-glyceraldehyde 3-phosphate and beta-D-fructose 6-phosphate from D-ribose 5-phosphate and D-xylulose 5-phosphate (non-oxidative stage): step 2/3. In terms of biological role, transaldolase is important for the balance of metabolites in the pentose-phosphate pathway. This chain is Transaldolase, found in Shewanella sp. (strain MR-4).